Reading from the N-terminus, the 145-residue chain is Phosphoribosyl-AMP cyclohydrolase (145 aa).

Aspartate 87 contacts Mg(2+). Cysteine 88 is a binding site for Zn(2+). 2 residues coordinate Mg(2+): aspartate 89 and aspartate 91. Residues cysteine 104 and cysteine 111 each contribute to the Zn(2+) site.

Belongs to the PRA-CH family. Homodimer. Mg(2+) serves as cofactor. The cofactor is Zn(2+).

Its subcellular location is the cytoplasm. It carries out the reaction 1-(5-phospho-beta-D-ribosyl)-5'-AMP + H2O = 1-(5-phospho-beta-D-ribosyl)-5-[(5-phospho-beta-D-ribosylamino)methylideneamino]imidazole-4-carboxamide. It participates in amino-acid biosynthesis; L-histidine biosynthesis; L-histidine from 5-phospho-alpha-D-ribose 1-diphosphate: step 3/9. In terms of biological role, catalyzes the hydrolysis of the adenine ring of phosphoribosyl-AMP. The sequence is that of Phosphoribosyl-AMP cyclohydrolase from Nitrobacter winogradskyi (strain ATCC 25391 / DSM 10237 / CIP 104748 / NCIMB 11846 / Nb-255).